Here is a 129-residue protein sequence, read N- to C-terminus: Small ribosomal subunit protein uS11 (129 aa).

The protein belongs to the universal ribosomal protein uS11 family. Part of the 30S ribosomal subunit. Interacts with proteins S7 and S18. Binds to IF-3.

Located on the platform of the 30S subunit, it bridges several disparate RNA helices of the 16S rRNA. Forms part of the Shine-Dalgarno cleft in the 70S ribosome. This is Small ribosomal subunit protein uS11 from Salmonella typhi.